The sequence spans 208 residues: GTP cyclohydrolase 1 (208 aa).

C89, H92, and C163 together coordinate Zn(2+).

This sequence belongs to the GTP cyclohydrolase I family. In terms of assembly, homomer.

It carries out the reaction GTP + H2O = 7,8-dihydroneopterin 3'-triphosphate + formate + H(+). Its pathway is cofactor biosynthesis; 7,8-dihydroneopterin triphosphate biosynthesis; 7,8-dihydroneopterin triphosphate from GTP: step 1/1. This Saccharolobus islandicus (strain L.S.2.15 / Lassen #1) (Sulfolobus islandicus) protein is GTP cyclohydrolase 1.